An 828-amino-acid polypeptide reads, in one-letter code: Protein SEY1 homolog (828 aa).

Over 1–718 (MTEDVMNDDF…SSKNGISWKN (718 aa)) the chain is Cytoplasmic. Positions 44-284 (GFNYNVLSIL…VPSDGFFYYA (241 aa)) constitute a GB1/RHD3-type G domain. Residue 54–61 (GCQSSGKS) coordinates GTP. A helical transmembrane segment spans residues 719–739 (IPPPFWILLLLCSWNELCSVL). Over 740 to 742 (RIV) the chain is Lumenal. Residues 743-763 (FKVQVLIPLIILGFIVVQYFS) traverse the membrane as a helical segment. Residues 764–828 (HLVFGTSADA…NDSGKKAEEN (65 aa)) lie on the Cytoplasmic side of the membrane.

It belongs to the TRAFAC class dynamin-like GTPase superfamily. GB1/RHD3 GTPase family. RHD3 subfamily.

It localises to the endoplasmic reticulum membrane. In terms of biological role, probable GTP-binding protein that may be involved in cell development. The polypeptide is Protein SEY1 homolog (Babesia bovis).